The following is a 271-amino-acid chain: Phosphate import ATP-binding protein PstB (271 aa).

The ABC transporter domain occupies phenylalanine 25 to isoleucine 266. Glycine 57 to serine 64 is an ATP binding site.

This sequence belongs to the ABC transporter superfamily. Phosphate importer (TC 3.A.1.7) family. The complex is composed of two ATP-binding proteins (PstB), two transmembrane proteins (PstC and PstA) and a solute-binding protein (PstS).

The protein resides in the cell membrane. It catalyses the reaction phosphate(out) + ATP + H2O = ADP + 2 phosphate(in) + H(+). Part of the ABC transporter complex PstSACB involved in phosphate import. Responsible for energy coupling to the transport system. The chain is Phosphate import ATP-binding protein PstB from Bacillus cereus (strain ATCC 14579 / DSM 31 / CCUG 7414 / JCM 2152 / NBRC 15305 / NCIMB 9373 / NCTC 2599 / NRRL B-3711).